The chain runs to 715 residues: MMQESATETISNSSMNQNGMSTLSSQLDAGSRDGRSSGDTSSEVSTVELLHLQQQQALQAARQLLLQQQTSGLKSPKSSDKQRPLQVPVSVAMMTPQVITPQQMQQILQQQVLSPQQLQALLQQQQAVMLQQQQLQEFYKKQQEQLHLQLLQQQQQQQQQQQQQQQQQQQQQQQQQQQQQQQQQQQQQQQQHPGKQAKEQQQQQQQQQQLAAQQLVFQQQLLQMQQLQQQQHLLSLQRQGLISIPPGQAALPVQSLPQAGLSPAEIQQLWKEVTGVHSMEDNGIKHGGLDLTTNNSSSTTSSNTSKASPPITHHSIVNGQSSVLSARRDSSSHEETGASHTLYGHGVCKWPGCESICEDFGQFLKHLNNEHALDDRSTAQCRVQMQVVQQLEIQLSKERERLQAMMTHLHMRPSEPKPSPKPLNLVSSVTMSKNMLETSPQSLPQTPTTPTAPVTPITQGPSVITPASVPNVGAIRRRHSDKYNIPMSSEIAPNYEFYKNADVRPPFTYATLIRQAIMESSDRQLTLNEIYSWFTRTFAYFRRNAATWKNAVRHNLSLHKCFVRVENVKGAVWTVDEVEYQKRRSQKITGSPTLVKNIPTSLGYGAALNASLQAALAESSLPLLSNPGLINNASSGLLQAVHEDLNGSLDHIDSNGNSSPGCSPQPHIHSIHVKEEPVIAEDEDCPMSLVTTANHSPELEDDREIEEEPLSEDLE.

The segment covering 1 to 28 (MMQESATETISNSSMNQNGMSTLSSQLD) has biased composition (polar residues). Disordered regions lie at residues 1–46 (MMQE…EVST) and 281–339 (DNGI…TGAS). A compositionally biased stretch (low complexity) spans 292 to 305 (TTNNSSSTTSSNTS). Over residues 326 to 337 (ARRDSSSHEETG) the composition is skewed to basic and acidic residues. The C2H2-type zinc finger occupies 346–371 (GVCKWPGCESICEDFGQFLKHLNNEH). The tract at residues 388-409 (VQQLEIQLSKERERLQAMMTHL) is leucine-zipper. A CTBP1-binding region spans residues 422 to 426 (PLNLV). Residues 438-459 (TSPQSLPQTPTTPTAPVTPITQ) are compositionally biased toward low complexity. The tract at residues 438–465 (TSPQSLPQTPTTPTAPVTPITQGPSVIT) is disordered. The fork-head DNA-binding region spans 504–594 (RPPFTYATLI…SQKITGSPTL (91 aa)). 2 disordered regions span residues 649–668 (LDHI…QPHI) and 678–715 (VIAE…EDLE). Over residues 699–715 (LEDDREIEEEPLSEDLE) the composition is skewed to acidic residues.

Forms homodimers and heterodimers with FOXP1 and FOXP4. Dimerization is required for DNA-binding. Interacts with CTBP1. Interacts with FOXP1. Isoform 1 and isoform 3 interact with TBR1. Interacts with ZMYM2. Isoform 1 and isoform 6 are expressed in adult and fetal brain, caudate nucleus and lung.

It is found in the nucleus. In terms of biological role, transcriptional repressor that may play a role in the specification and differentiation of lung epithelium. May also play a role in developing neural, gastrointestinal and cardiovascular tissues. Can act with CTBP1 to synergistically repress transcription but CTPBP1 is not essential. Plays a role in synapse formation by regulating SRPX2 levels. Involved in neural mechanisms mediating the development of speech and language. The sequence is that of Forkhead box protein P2 (FOXP2) from Homo sapiens (Human).